We begin with the raw amino-acid sequence, 578 residues long: MHMNKPLQAWRTPLLTLIFVLPLTATGAVKLTLDGMNSTLDNGLLKVRFGADGSAKEVWKGGTNLISRLSGAARDPDKNRSFYLDYYSGGVNEFVPERLEVIKQTPDQVHLAYIDDQNGKLRLEYHLIMTRDVSGLYSYVVAANTGSAPVTVSELRNVYRFDATRLDTLFNSIRRGTPLLYDELEQLPKVQDETWRLPDGSVYSKYDFAGYQRESRYWGVMGNGYGAWMVPASGEYYSGDALKQELLVHQDAIILNYLTGSHFGTPDMVAQPGFEKLYGPWLLYINQGNDRELVADVSRRAEHERASWPYRWLDDARYPRQRATVSGRLRTEAPHATVVLNSSAENFDIQTTGYLFSARTNRDGRFSLSNVPPGEYRLSAYADGGTQIGLLAQQTVRVEGKKTRLGQIDARQPAPLAWAIGQADRRADEFRFGDKPRQYRWQTEVPADLTFEIGKSRERKDWYYAQTQPGSWHILFNTRTPEQPYTLNIAIAAASNNGMTTPASSPQLAVKLNGQLLTTLKYDNDKSIYRGAMQSGRYHEAHIPLPAGALQQGGNRITLELLGGMVMYDAITLTETPQ.

Positions 1-27 are cleaved as a signal peptide; that stretch reads MHMNKPLQAWRTPLLTLIFVLPLTATG.

Belongs to the polysaccharide lyase 4 family.

It is found in the secreted. The catalysed reaction is Endotype eliminative cleavage of L-alpha-rhamnopyranosyl-(1-&gt;4)-alpha-D-galactopyranosyluronic acid bonds of rhamnogalacturonan I domains in ramified hairy regions of pectin leaving L-rhamnopyranose at the reducing end and 4-deoxy-4,5-unsaturated D-galactopyranosyluronic acid at the non-reducing end.. Its function is as follows. Degrades the rhamnogalacturonan I (RG-I) backbone of pectin. Is required for the full virulence of E.chrysanthemi strain 3937 as it is involved in rotting of plant tissue. This Dickeya dadantii (strain 3937) (Erwinia chrysanthemi (strain 3937)) protein is Rhamnogalacturonate lyase (rhiE).